Consider the following 157-residue polypeptide: Protein Smg (157 aa).

Belongs to the Smg family.

This Escherichia coli O8 (strain IAI1) protein is Protein Smg.